The following is a 493-amino-acid chain: Involucrin (493 aa).

Disordered stretches follow at residues 1-47 (MSQQ…CQKV), 60-123 (EEKH…GQLE), and 139-493 (KRDE…GQHE). The span at 76-89 (EQQQPQEQELQQQH) shows a compositional bias: low complexity. 5 stretches are compositionally biased toward basic and acidic residues: residues 90-116 (WEQD…REKQ), 139-151 (KRDE…KEQL), 161-174 (QLKH…HLEL), 184-193 (NLEHQEKPLE), and 201-213 (QLKH…KPLE). Residues 228–240 (QEGQSELPEQQRG) show a composition bias toward polar residues. Basic and acidic residues-rich tracts occupy residues 250–270 (GQLK…HEEG), 282–360 (KHLE…HEGQ), 372–386 (KHLE…HPEQ), 411–431 (KHLE…EQLK), and 439–450 (QLKDLEQQERQL). Residues 473–493 (GEVLLPVEQQQQKQEVQGQHE) show a composition bias toward low complexity.

Belongs to the involucrin family. In terms of assembly, directly or indirectly cross-linked to cornifelin (CNFN). Substrate of transglutaminase. Specific glutamines or lysines are cross-linked to keratins, desmoplakin and to inter involucrin molecules. As to expression, keratinocytes of epidermis and other stratified squamous epithelia.

It is found in the cytoplasm. In terms of biological role, part of the insoluble cornified cell envelope (CE) of stratified squamous epithelia. This is Involucrin (IVL) from Saguinus oedipus (Cotton-top tamarin).